The chain runs to 493 residues: Endoglucanase 23 (493 aa).

The signal sequence occupies residues 1 to 23; that stretch reads MKASIYLVTVFILLLLLLPTAIP. The active-site Nucleophile is Asp78. An N-linked (GlcNAc...) asparagine glycan is attached at Asn297. The active site involves His410. Asn465 is a glycosylation site (N-linked (GlcNAc...) asparagine). The active site involves Glu470.

This sequence belongs to the glycosyl hydrolase 9 (cellulase E) family.

Its subcellular location is the secreted. It catalyses the reaction Endohydrolysis of (1-&gt;4)-beta-D-glucosidic linkages in cellulose, lichenin and cereal beta-D-glucans.. The protein is Endoglucanase 23 of Arabidopsis thaliana (Mouse-ear cress).